A 396-amino-acid polypeptide reads, in one-letter code: Tryptophan synthase beta chain (396 aa).

K86 is modified (N6-(pyridoxal phosphate)lysine).

Belongs to the TrpB family. Tetramer of two alpha and two beta chains. Requires pyridoxal 5'-phosphate as cofactor.

The catalysed reaction is (1S,2R)-1-C-(indol-3-yl)glycerol 3-phosphate + L-serine = D-glyceraldehyde 3-phosphate + L-tryptophan + H2O. It functions in the pathway amino-acid biosynthesis; L-tryptophan biosynthesis; L-tryptophan from chorismate: step 5/5. Its function is as follows. The beta subunit is responsible for the synthesis of L-tryptophan from indole and L-serine. The protein is Tryptophan synthase beta chain of Vibrio campbellii (strain ATCC BAA-1116).